Consider the following 207-residue polypeptide: ATP synthase subunit b (207 aa).

The first 27 residues, 1 to 27 (MKLRATFVFKTTLVALSFALFALFLVS), serve as a signal peptide directing secretion. C28 carries N-palmitoyl cysteine lipidation. Residue C28 is the site of S-diacylglycerol cysteine attachment. The chain crosses the membrane as a helical span at residues 49-69 (WVFLAHLLAFVILLFLLLFLF).

The protein belongs to the ATPase B chain family. In terms of assembly, F-type ATPases have 2 components, F(1) - the catalytic core - and F(0) - the membrane proton channel. F(1) has five subunits: alpha(3), beta(3), gamma(1), delta(1), epsilon(1). F(0) has three main subunits: a(1), b(2) and c(10-14). The alpha and beta chains form an alternating ring which encloses part of the gamma chain. F(1) is attached to F(0) by a central stalk formed by the gamma and epsilon chains, while a peripheral stalk is formed by the delta and b chains.

Its subcellular location is the cell membrane. Functionally, f(1)F(0) ATP synthase produces ATP from ADP in the presence of a proton or sodium gradient. F-type ATPases consist of two structural domains, F(1) containing the extramembraneous catalytic core and F(0) containing the membrane proton channel, linked together by a central stalk and a peripheral stalk. During catalysis, ATP synthesis in the catalytic domain of F(1) is coupled via a rotary mechanism of the central stalk subunits to proton translocation. Its function is as follows. Component of the F(0) channel, it forms part of the peripheral stalk, linking F(1) to F(0). The polypeptide is ATP synthase subunit b (Mycoplasma pneumoniae (strain ATCC 29342 / M129 / Subtype 1) (Mycoplasmoides pneumoniae)).